We begin with the raw amino-acid sequence, 414 residues long: Probable serine/threonine-protein kinase CHK1 homolog (414 aa).

Residues 4-255 (YELQETLASG…VSTVMKDPWV (252 aa)) enclose the Protein kinase domain. Residues 10 to 18 (LASGSTSKV) and K32 each bind ATP. D121 functions as the Proton acceptor in the catalytic mechanism. The segment at 291–310 (PGEVHKTPRTRPVSSQPRRA) is disordered.

This sequence belongs to the protein kinase superfamily. CAMK Ser/Thr protein kinase family. NIM1 subfamily.

Its subcellular location is the nucleus. The catalysed reaction is L-seryl-[protein] + ATP = O-phospho-L-seryl-[protein] + ADP + H(+). It catalyses the reaction L-threonyl-[protein] + ATP = O-phospho-L-threonyl-[protein] + ADP + H(+). Its function is as follows. Serine/threonine-protein kinase which is required for checkpoint-mediated cell cycle arrest and activation of DNA repair in response to the presence of DNA damage or unreplicated DNA. May also negatively regulate cell cycle progression during unperturbed cell cycles. This is Probable serine/threonine-protein kinase CHK1 homolog (CHK1) from Encephalitozoon cuniculi (strain GB-M1) (Microsporidian parasite).